The following is a 1392-amino-acid chain: DNA-directed RNA polymerase subunit beta'' (1392 aa).

Residues Cys224, Cys295, Cys302, and Cys305 each coordinate Zn(2+).

This sequence belongs to the RNA polymerase beta' chain family. RpoC2 subfamily. As to quaternary structure, in plastids the minimal PEP RNA polymerase catalytic core is composed of four subunits: alpha, beta, beta', and beta''. When a (nuclear-encoded) sigma factor is associated with the core the holoenzyme is formed, which can initiate transcription. Zn(2+) is required as a cofactor.

It is found in the plastid. The protein localises to the chloroplast. It catalyses the reaction RNA(n) + a ribonucleoside 5'-triphosphate = RNA(n+1) + diphosphate. DNA-dependent RNA polymerase catalyzes the transcription of DNA into RNA using the four ribonucleoside triphosphates as substrates. The polypeptide is DNA-directed RNA polymerase subunit beta'' (Eucalyptus globulus subsp. globulus (Tasmanian blue gum)).